The following is a 362-amino-acid chain: Holliday junction branch migration complex subunit RuvB (362 aa).

The tract at residues 4–186 (PDRPQRLVEQ…FGIPLRMQFY (183 aa)) is large ATPase domain (RuvB-L). Residues Ile25, Arg26, Gly67, Lys70, Thr71, Thr72, 133–135 (EDF), Arg176, Tyr186, and Arg223 contribute to the ATP site. Thr71 lines the Mg(2+) pocket. The small ATPAse domain (RuvB-S) stretch occupies residues 187–257 (EPEELQLIVA…AAGGALTRLE (71 aa)). The segment at 260-362 (RLGFDAMDRR…GTPEGEGEDV (103 aa)) is head domain (RuvB-H). Positions 296, 315, and 320 each coordinate DNA.

Belongs to the RuvB family. Homohexamer. Forms an RuvA(8)-RuvB(12)-Holliday junction (HJ) complex. HJ DNA is sandwiched between 2 RuvA tetramers; dsDNA enters through RuvA and exits via RuvB. An RuvB hexamer assembles on each DNA strand where it exits the tetramer. Each RuvB hexamer is contacted by two RuvA subunits (via domain III) on 2 adjacent RuvB subunits; this complex drives branch migration. In the full resolvosome a probable DNA-RuvA(4)-RuvB(12)-RuvC(2) complex forms which resolves the HJ.

It localises to the cytoplasm. The enzyme catalyses ATP + H2O = ADP + phosphate + H(+). In terms of biological role, the RuvA-RuvB-RuvC complex processes Holliday junction (HJ) DNA during genetic recombination and DNA repair, while the RuvA-RuvB complex plays an important role in the rescue of blocked DNA replication forks via replication fork reversal (RFR). RuvA specifically binds to HJ cruciform DNA, conferring on it an open structure. The RuvB hexamer acts as an ATP-dependent pump, pulling dsDNA into and through the RuvAB complex. RuvB forms 2 homohexamers on either side of HJ DNA bound by 1 or 2 RuvA tetramers; 4 subunits per hexamer contact DNA at a time. Coordinated motions by a converter formed by DNA-disengaged RuvB subunits stimulates ATP hydrolysis and nucleotide exchange. Immobilization of the converter enables RuvB to convert the ATP-contained energy into a lever motion, pulling 2 nucleotides of DNA out of the RuvA tetramer per ATP hydrolyzed, thus driving DNA branch migration. The RuvB motors rotate together with the DNA substrate, which together with the progressing nucleotide cycle form the mechanistic basis for DNA recombination by continuous HJ branch migration. Branch migration allows RuvC to scan DNA until it finds its consensus sequence, where it cleaves and resolves cruciform DNA. This chain is Holliday junction branch migration complex subunit RuvB, found in Rhodospirillum centenum (strain ATCC 51521 / SW).